Reading from the N-terminus, the 118-residue chain is Elicitin (118 aa).

The signal sequence occupies residues 1-20 (MNFRALFAATVAALVGSTSA). 3 disulfide bridges follow: C23–C91, C47–C76, and C71–C115.

This sequence belongs to the elicitin family.

The protein localises to the secreted. Functionally, induces local and distal defense responses (incompatible hypersensitive reaction) in plants from the solanaceae and cruciferae families. Elicits leaf necrosis and causes the accumulation of pathogenesis-related proteins. Might interact with the lipidic molecules of the plasma membrane. This Phytophthora nicotianae (Potato buckeye rot agent) protein is Elicitin (PARA1).